The following is a 247-amino-acid chain: Probable transcriptional regulatory protein Hhal_2210 (247 aa).

This sequence belongs to the TACO1 family.

The protein localises to the cytoplasm. This chain is Probable transcriptional regulatory protein Hhal_2210, found in Halorhodospira halophila (strain DSM 244 / SL1) (Ectothiorhodospira halophila (strain DSM 244 / SL1)).